The following is a 54-amino-acid chain: Ribulose bisphosphate carboxylase large chain (54 aa).

A propeptide spanning residues 1–2 (MS) is cleaved from the precursor. Proline 3 carries the post-translational modification N-acetylproline. An N6,N6,N6-trimethyllysine modification is found at lysine 14.

It belongs to the RuBisCO large chain family. Type I subfamily. Heterohexadecamer of 8 large chains and 8 small chains.

It localises to the plastid. It is found in the chloroplast. It catalyses the reaction 2 (2R)-3-phosphoglycerate + 2 H(+) = D-ribulose 1,5-bisphosphate + CO2 + H2O. The catalysed reaction is D-ribulose 1,5-bisphosphate + O2 = 2-phosphoglycolate + (2R)-3-phosphoglycerate + 2 H(+). In terms of biological role, ruBisCO catalyzes two reactions: the carboxylation of D-ribulose 1,5-bisphosphate, the primary event in carbon dioxide fixation, as well as the oxidative fragmentation of the pentose substrate in the photorespiration process. Both reactions occur simultaneously and in competition at the same active site. This chain is Ribulose bisphosphate carboxylase large chain (rbcL), found in Geum borisii (Avens).